A 372-amino-acid chain; its full sequence is 4-hydroxy-3-methylbut-2-en-1-yl diphosphate synthase (flavodoxin) (372 aa).

[4Fe-4S] cluster contacts are provided by cysteine 270, cysteine 273, cysteine 305, and glutamate 312.

This sequence belongs to the IspG family. It depends on [4Fe-4S] cluster as a cofactor.

The enzyme catalyses (2E)-4-hydroxy-3-methylbut-2-enyl diphosphate + oxidized [flavodoxin] + H2O + 2 H(+) = 2-C-methyl-D-erythritol 2,4-cyclic diphosphate + reduced [flavodoxin]. The protein operates within isoprenoid biosynthesis; isopentenyl diphosphate biosynthesis via DXP pathway; isopentenyl diphosphate from 1-deoxy-D-xylulose 5-phosphate: step 5/6. Functionally, converts 2C-methyl-D-erythritol 2,4-cyclodiphosphate (ME-2,4cPP) into 1-hydroxy-2-methyl-2-(E)-butenyl 4-diphosphate. This chain is 4-hydroxy-3-methylbut-2-en-1-yl diphosphate synthase (flavodoxin), found in Aliivibrio salmonicida (strain LFI1238) (Vibrio salmonicida (strain LFI1238)).